We begin with the raw amino-acid sequence, 458 residues long: Serine--tRNA ligase (458 aa).

255–257 contributes to the L-serine binding site; sequence TSE. ATP contacts are provided by residues 286 to 288 and Val-302; that span reads RKE. Residue Glu-309 coordinates L-serine. ATP is bound at residue 373 to 376; the sequence is ELVS. L-serine is bound at residue Thr-409.

This sequence belongs to the class-II aminoacyl-tRNA synthetase family. Type-1 seryl-tRNA synthetase subfamily. Homodimer. The tRNA molecule binds across the dimer.

The protein localises to the cytoplasm. It carries out the reaction tRNA(Ser) + L-serine + ATP = L-seryl-tRNA(Ser) + AMP + diphosphate + H(+). It catalyses the reaction tRNA(Sec) + L-serine + ATP = L-seryl-tRNA(Sec) + AMP + diphosphate + H(+). It participates in aminoacyl-tRNA biosynthesis; selenocysteinyl-tRNA(Sec) biosynthesis; L-seryl-tRNA(Sec) from L-serine and tRNA(Sec): step 1/1. Catalyzes the attachment of serine to tRNA(Ser). Is also able to aminoacylate tRNA(Sec) with serine, to form the misacylated tRNA L-seryl-tRNA(Sec), which will be further converted into selenocysteinyl-tRNA(Sec). The protein is Serine--tRNA ligase of Ignicoccus hospitalis (strain KIN4/I / DSM 18386 / JCM 14125).